The primary structure comprises 631 residues: ATP-dependent DNA helicase 2 subunit 1 (631 aa).

The Ku domain maps to 262–487; the sequence is FYLGPNLSMS…VEFFQKIIKK (226 aa). The disordered stretch occupies residues 550–570; the sequence is AEPHKKRAAKSTTAGASGPKM.

Belongs to the ku70 family. Heterodimer of a 70 kDa and a 80 kDa subunit.

The protein localises to the nucleus. Its subcellular location is the chromosome. The catalysed reaction is ATP + H2O = ADP + phosphate + H(+). In terms of biological role, single-stranded DNA-dependent ATP-dependent helicase. Involved in non-homologous end joining (NHEJ) DNA double strand break repair. Sequence-specific DNA-binding protein that has a high affinity for a 31 bp sequence in the Yp1 gene. Site-specific DNA binding to 31 bp P element inverted repeats. In Drosophila melanogaster (Fruit fly), this protein is ATP-dependent DNA helicase 2 subunit 1 (Irbp).